The chain runs to 184 residues: ATP synthase subunit b, chloroplastic (184 aa).

The chain crosses the membrane as a helical span at residues 27-49 (FATNPINLSVVLGVLIFFGKGVL).

Belongs to the ATPase B chain family. In terms of assembly, F-type ATPases have 2 components, F(1) - the catalytic core - and F(0) - the membrane proton channel. F(1) has five subunits: alpha(3), beta(3), gamma(1), delta(1), epsilon(1). F(0) has four main subunits: a(1), b(1), b'(1) and c(10-14). The alpha and beta chains form an alternating ring which encloses part of the gamma chain. F(1) is attached to F(0) by a central stalk formed by the gamma and epsilon chains, while a peripheral stalk is formed by the delta, b and b' chains.

Its subcellular location is the plastid. It is found in the chloroplast thylakoid membrane. Its function is as follows. F(1)F(0) ATP synthase produces ATP from ADP in the presence of a proton or sodium gradient. F-type ATPases consist of two structural domains, F(1) containing the extramembraneous catalytic core and F(0) containing the membrane proton channel, linked together by a central stalk and a peripheral stalk. During catalysis, ATP synthesis in the catalytic domain of F(1) is coupled via a rotary mechanism of the central stalk subunits to proton translocation. Component of the F(0) channel, it forms part of the peripheral stalk, linking F(1) to F(0). This Amborella trichopoda protein is ATP synthase subunit b, chloroplastic.